Reading from the N-terminus, the 85-residue chain is Large ribosomal subunit protein bL27 (85 aa).

The interval 1–23 (MAHKKGQGSTQNNRDSAGRRLGV) is disordered.

The protein belongs to the bacterial ribosomal protein bL27 family.

This Helicobacter hepaticus (strain ATCC 51449 / 3B1) protein is Large ribosomal subunit protein bL27.